Reading from the N-terminus, the 498-residue chain is MAAAAGPGAALSPRPCDSDPATPGAQSPKDDNEDNSNDGTQPSKRRRMGSGDSSRSCETSSQDLGFSYYPAENLIEYKWPPDETGEYYMLQEQVSEYLGVTSFKRKYPDLERRDLSHKEKLYLRELNVITETQCTLGLTALRSDEVIDLMIKEYPAKHAEYSVILQEKERQRITDHYKEYSQMQQQNTQKVEASKVPEYIKKAAKKAAEFNSNLNRERMEERRAYFDLQTHVIQVPQGKYKVLPTERTKVSSYPVALIPGQFQEYYKRYSPDELRYLPLNTALYEPPLDPELPALDSDGDSDDGEDGRGDEKRKNKGTSDSSSGNVSEGESPPDSQEDSFQGRQKSKDKAATPRKDGPKRSVLSKSVPGYKPKVIPNAICGICLKGKESNKKGKAESLIHCSQCENSGHPSCLDMTMELVSMIKTYPWQCMECKTCIICGQPHHEEEMMFCDMCDRGYHTFCVGLGAIPSGRWICDCCQRAPPTPRKVGRRGKNSKEG.

A compositionally biased stretch (low complexity) spans 1-10 (MAAAAGPGAA). The tract at residues 1 to 62 (MAAAAGPGAA…SSRSCETSSQ (62 aa)) is disordered. Residue Ala-2 is modified to N-acetylalanine. Residues Ser-12, Ser-36, and Ser-50 each carry the phosphoserine modification. Residues 89 to 185 (MLQEQVSEYL…HYKEYSQMQQ (97 aa)) form an essential to induce neural progenitor proliferation region. The segment at 89 to 295 (MLQEQVSEYL…PPLDPELPAL (207 aa)) is SAY. Lys-241 is covalently cross-linked (Glycyl lysine isopeptide (Lys-Gly) (interchain with G-Cter in SUMO2)). Position 270 is a phosphoserine (Ser-270). A compositionally biased stretch (low complexity) spans 285 to 296 (EPPLDPELPALD). The segment at 285–368 (EPPLDPELPA…KRSVLSKSVP (84 aa)) is disordered. The essential to induce neural progenitor proliferation stretch occupies residues 292–334 (LPALDSDGDSDDGEDGRGDEKRKNKGTSDSSSGNVSEGESPPD). Phosphoserine occurs at positions 297, 301, 327, and 331. A compositionally biased stretch (polar residues) spans 318-328 (TSDSSSGNVSE). Basic and acidic residues predominate over residues 345–359 (KSKDKAATPRKDGPK). Residues 379 to 436 (ICGICLKGKESNKKGKAESLIHCSQCENSGHPSCLDMTMELVSMIKTYPWQCMECKTC) form a PHD-type 1; degenerate zinc finger. Lys-385 is covalently cross-linked (Glycyl lysine isopeptide (Lys-Gly) (interchain with G-Cter in SUMO2)). The PHD-type 2; degenerate zinc finger occupies 438–481 (ICGQPHHEEEMMFCDMCDRGYHTFCVGLGAIPSGRWICDCCQRA).

Belongs to the SAYP family. Component of neural progenitors-specific chromatin remodeling complex (npBAF complex) composed of at least, ARID1A/BAF250A or ARID1B/BAF250B, SMARCD1/BAF60A, SMARCD3/BAF60C, SMARCA2/BRM/BAF190B, SMARCA4/BRG1/BAF190A, SMARCB1/BAF47, SMARCC1/BAF155, SMARCE1/BAF57, SMARCC2/BAF170, PHF10/BAF45A, ACTL6A/BAF53A and actin. Interacts with ACTL6A/BAF53A, SMARCA2/BRM/BAF190B, SMARCA4/BRG1/BAF190A and PBRM1/BAF180.

The protein resides in the nucleus. Functionally, involved in transcription activity regulation by chromatin remodeling. Belongs to the neural progenitors-specific chromatin remodeling complex (npBAF complex) and is required for the proliferation of neural progenitors. During neural development a switch from a stem/progenitor to a post-mitotic chromatin remodeling mechanism occurs as neurons exit the cell cycle and become committed to their adult state. The transition from proliferating neural stem/progenitor cells to post-mitotic neurons requires a switch in subunit composition of the npBAF and nBAF complexes. As neural progenitors exit mitosis and differentiate into neurons, npBAF complexes which contain ACTL6A/BAF53A and PHF10/BAF45A, are exchanged for homologous alternative ACTL6B/BAF53B and DPF1/BAF45B or DPF3/BAF45C subunits in neuron-specific complexes (nBAF). The npBAF complex is essential for the self-renewal/proliferative capacity of the multipotent neural stem cells. The nBAF complex along with CREST plays a role regulating the activity of genes essential for dendrite growth. The sequence is that of PHD finger protein 10 (PHF10) from Homo sapiens (Human).